The sequence spans 448 residues: MGLSPVNIFKPFGLGRAKAVIAAVSGGSDSLGLLFLLKDYLSTLESPPVLIAVTVDHKLRAESALEAENVGLLCQKHGIMHCVLSWDDPKPAHGLAAAARTARYRLLVQAARDAGAGFIVTGHTENDQIETFLMRKARSGHCEARGLAAMSPRSLLEGSVKLARPLLTVSRQALRDELTRRGIAWVDDPSNANIDYERPRVRLGVAAEADGQEVLEQIAQAGAARERDNAALVEALADPATLGVDAAGMMFLNADCYAALSPGARQLFSGLLASIAGGRRFLPGDGERRRIERMLSGQDAPRRLTVFGALIERGEKGAPHRFRRERRNLPKLDLVPGQHIVWDGRFCFFNSGGRSFEIAPPGRQELIDFLKNSGRDIESRRCEALLISPALYEGGKLASVPFLPGAEWPQGVHIERHFAIFDHVLPGHDFALAQAVEARLGRACAEIS.

25-30 (SGGSDS) contributes to the ATP binding site.

The protein belongs to the tRNA(Ile)-lysidine synthase family.

It is found in the cytoplasm. The catalysed reaction is cytidine(34) in tRNA(Ile2) + L-lysine + ATP = lysidine(34) in tRNA(Ile2) + AMP + diphosphate + H(+). Functionally, ligates lysine onto the cytidine present at position 34 of the AUA codon-specific tRNA(Ile) that contains the anticodon CAU, in an ATP-dependent manner. Cytidine is converted to lysidine, thus changing the amino acid specificity of the tRNA from methionine to isoleucine. This Brucella suis biovar 1 (strain 1330) protein is tRNA(Ile)-lysidine synthase.